We begin with the raw amino-acid sequence, 372 residues long: Queuine tRNA-ribosyltransferase (372 aa).

The active-site Proton acceptor is the D92. Substrate-binding positions include 92-96, D146, Q188, and G215; that span reads DSGGY. The segment at 246 to 252 is RNA binding; that stretch reads GIGSLKE. The Nucleophile role is filled by D265. Residues 270–274 are RNA binding; important for wobble base 34 recognition; that stretch reads TRLGR. Positions 303, 305, 308, and 334 each coordinate Zn(2+).

Belongs to the queuine tRNA-ribosyltransferase family. Homodimer. Within each dimer, one monomer is responsible for RNA recognition and catalysis, while the other monomer binds to the replacement base PreQ1. Zn(2+) is required as a cofactor.

The catalysed reaction is 7-aminomethyl-7-carbaguanine + guanosine(34) in tRNA = 7-aminomethyl-7-carbaguanosine(34) in tRNA + guanine. It functions in the pathway tRNA modification; tRNA-queuosine biosynthesis. Catalyzes the base-exchange of a guanine (G) residue with the queuine precursor 7-aminomethyl-7-deazaguanine (PreQ1) at position 34 (anticodon wobble position) in tRNAs with GU(N) anticodons (tRNA-Asp, -Asn, -His and -Tyr). Catalysis occurs through a double-displacement mechanism. The nucleophile active site attacks the C1' of nucleotide 34 to detach the guanine base from the RNA, forming a covalent enzyme-RNA intermediate. The proton acceptor active site deprotonates the incoming PreQ1, allowing a nucleophilic attack on the C1' of the ribose to form the product. After dissociation, two additional enzymatic reactions on the tRNA convert PreQ1 to queuine (Q), resulting in the hypermodified nucleoside queuosine (7-(((4,5-cis-dihydroxy-2-cyclopenten-1-yl)amino)methyl)-7-deazaguanosine). The chain is Queuine tRNA-ribosyltransferase from Prochlorococcus marinus (strain AS9601).